Consider the following 160-residue polypeptide: Serine-protein kinase RsbW (160 aa).

Belongs to the anti-sigma-factor family.

The catalysed reaction is L-seryl-[protein] + ATP = O-phospho-L-seryl-[protein] + ADP + H(+). The enzyme catalyses L-threonyl-[protein] + ATP = O-phospho-L-threonyl-[protein] + ADP + H(+). Negative regulator of sigma-B activity. Phosphorylates and inactivates its specific antagonist protein, RsbV. Upon phosphorylation of RsbV, RsbW is released and binds to sigma-B, thereby blocking its ability to form an RNA polymerase holoenzyme (E-sigma-B). The protein is Serine-protein kinase RsbW of Bacillus mycoides (strain KBAB4) (Bacillus weihenstephanensis).